Consider the following 396-residue polypeptide: Phosphoglycerate kinase (396 aa).

Substrate is bound by residues 20–22, Arg35, 58–61, Arg115, and Arg155; these read DIN and HQGR. ATP contacts are provided by residues Glu328 and 353-356; that span reads GGDT.

Belongs to the phosphoglycerate kinase family. In terms of assembly, monomer.

It is found in the cytoplasm. The enzyme catalyses (2R)-3-phosphoglycerate + ATP = (2R)-3-phospho-glyceroyl phosphate + ADP. The protein operates within carbohydrate degradation; glycolysis; pyruvate from D-glyceraldehyde 3-phosphate: step 2/5. The polypeptide is Phosphoglycerate kinase (Natronomonas pharaonis (strain ATCC 35678 / DSM 2160 / CIP 103997 / JCM 8858 / NBRC 14720 / NCIMB 2260 / Gabara) (Halobacterium pharaonis)).